Here is a 4998-residue protein sequence, read N- to C-terminus: SCO-spondin (4998 aa).

A signal peptide spans 1-17 (MLPLALLFGMLWTQANG). An EMI domain is found at 18–102 (HWCEQIETVH…ACCPGWGGAH (85 aa)). Residues 72 to 241 (GLCAIYKPPE…KLPGSEPGCL (170 aa)) form the VWFD 1 domain. Cystine bridges form between Cys-74-Cys-202 and Cys-103-Cys-240. Residues Asn-88 and Asn-130 are each glycosylated (N-linked (GlcNAc...) asparagine). The TIL 1 domain occupies 349–404 (CPGGQLYSDCVSSCPPSCSAVAQGEEGSCGKECVSGCECPTGLFWDGALCVPAAHC). Positions 404 to 496 (CPCYHRRQRY…HGACDTGSCL (93 aa)) constitute a VWFC 1 domain. The VWFD 2 domain maps to 442–615 (AECAVGGDGH…FQVSGDGRCP (174 aa)). Disulfide bonds link Cys-444-Cys-577 and Cys-468-Cys-614. Residues Asn-534 and Asn-698 are each glycosylated (N-linked (GlcNAc...) asparagine). Residues 706 to 759 (CPGGQVYQECAPVCGHHCGEPEDCKELGICVAGCNCPPGLLWDLEGQCVPPSMC) enclose the TIL 2 domain. Residues Asn-771, Asn-790, Asn-824, and Asn-866 are each glycosylated (N-linked (GlcNAc...) asparagine). One can recognise a VWFD 3 domain in the interval 892-1062 (GWCQASGAPH…HSWRLNPLCP (171 aa)). Intrachain disulfides connect Cys-894-Cys-1026, Cys-916-Cys-1061, and Cys-937-Cys-944. The 57-residue stretch at 1153 to 1209 (CEGGQVYEPCGSTCPPTCHDHHSELRWHCQVITCVEGCFCPEGTLLHGGACMKLAAC) folds into the TIL 3 domain. An N-linked (GlcNAc...) asparagine glycan is attached at Asn-1230. LDL-receptor class A domains lie at 1253–1290 (GCAEGETLCRENGHCVPLEWLCDNQDDCGDGSDEEGCA), 1293–1328 (VCGEGQMSCQSGHCLPLSLICDGQDDCGDGTDEQGC), 1329–1365 (LCPHGSLACADGRCLPPALLCNGHPDCLDAADEESCL), and 1369–1407 (SCISGEVSCVDGTCVRTIQLCDGVWDCPDGADEGPSHCS). 12 cysteine pairs are disulfide-bonded: Cys-1254–Cys-1267, Cys-1261–Cys-1280, Cys-1274–Cys-1289, Cys-1294–Cys-1306, Cys-1301–Cys-1319, Cys-1313–Cys-1328, Cys-1330–Cys-1342, Cys-1337–Cys-1355, Cys-1349–Cys-1364, Cys-1370–Cys-1382, Cys-1377–Cys-1395, and Cys-1389–Cys-1406. The tract at residues 1406-1440 (CSLPSLPTPPGGIGQNPSTSSLDTAPSPVGSTSPA) is disordered. Residues 1420 to 1440 (QNPSTSSLDTAPSPVGSTSPA) are compositionally biased toward polar residues. LDL-receptor class A domains lie at 1442 to 1478 (PCSLLEFQCNSGECTPRGWRCDQEEDCTDGSDELDCG) and 1480 to 1519 (PCMLYQVPCAHSPHCVSPGQLCDGVTQCPDGSDEDPDVCE). Cystine bridges form between Cys-1443/Cys-1455, Cys-1450/Cys-1468, Cys-1462/Cys-1477, Cys-1481/Cys-1494, Cys-1488/Cys-1507, and Cys-1501/Cys-1518. A glycan (N-linked (GlcNAc...) asparagine) is linked at Asn-1528. One can recognise an LDL-receptor class A 7 domain in the interval 1533–1571 (PCPEFSCPDGTCIDFLLVCDGNPDCELADETEPSLDEQG). Disulfide bonds link Cys-1534-Cys-1544, Cys-1539-Cys-1557, Cys-1551-Cys-1572, Cys-1584-Cys-1620, Cys-1588-Cys-1625, Cys-1599-Cys-1610, Cys-1640-Cys-1680, Cys-1644-Cys-1685, and Cys-1654-Cys-1664. TSP type-1 domains lie at 1572 to 1626 (CGAW…EACP) and 1628 to 1686 (DGEW…EGCL). Residue Asn-1598 is glycosylated (N-linked (GlcNAc...) asparagine). Asn-1687 carries N-linked (GlcNAc...) asparagine glycosylation. Residues 1692–1746 (GELVFRTCAPCPLTCDDISGQAACPPDRPCSSPGCWCPDGKVLNTEGQCVRPRQC) enclose the TIL 4 domain. 2 consecutive EGF-like domains span residues 1702–1741 (CPLTCDDISGQAACPPDRPCSSPGCWCPDGKVLNTEGQCV) and 1742–1768 (RPRQCPCLVDGAHYWPGQRIKMDCQLC). A TSP type-1 3 domain is found at 1771–1827 (DCGWSSWSPWAECLGPCSSQSLQWSFRSPNNPRLSGHGRQCRGIHRKARRCQTEACE). 3 disulfides stabilise this stretch: Cys-1772-Cys-1811, Cys-1783-Cys-1787, and Cys-1821-Cys-1826. Positions 1827–1887 (EGCEQWGLMY…GMGESCCHCA (61 aa)) constitute a VWFC 2 domain. Asn-1892 and Asn-1989 each carry an N-linked (GlcNAc...) asparagine glycan. The region spanning 1929–2085 (CYSPLGLAGL…IFLWVELLGL (157 aa)) is the F5/8 type C domain. The 37-residue stretch at 2091-2127 (LCPGSRHRCASGECAPKGGPCDGAVDCDDGSDEEGCG) folds into the LDL-receptor class A 8 domain. Disulfide bonds link Cys-2092/Cys-2104, Cys-2099/Cys-2117, and Cys-2111/Cys-2126. The tract at residues 2119-2209 (DGSDEEGCGS…TFPPGAKSLH (91 aa)) is disordered. The segment covering 2130–2144 (HASTTSRTPALSPTQ) has biased composition (polar residues). Positions 2148-2158 (FPREVSEDLRQ) are enriched in basic and acidic residues. Composition is skewed to polar residues over residues 2164–2173 (TSHSPPSSGE) and 2190–2201 (QPMQTLSATSTF). 2 LDL-receptor class A domains span residues 2242-2278 (PCGPGQVPCDVLGCVEQEQLCDGREDCLDGSDEQHCA) and 2299-2335 (LCSPSQLRCGSGECLPFEHRCDLQVNCQDGSDEDNCV). 12 cysteine pairs are disulfide-bonded: Cys-2243–Cys-2255, Cys-2250–Cys-2268, Cys-2262–Cys-2277, Cys-2300–Cys-2312, Cys-2307–Cys-2325, Cys-2319–Cys-2334, Cys-2337–Cys-2373, Cys-2348–Cys-2352, Cys-2383–Cys-2388, Cys-2403–Cys-2440, Cys-2407–Cys-2445, and Cys-2418–Cys-2430. 2 TSP type-1 domains span residues 2336 to 2389 (DCVL…QACP) and 2391 to 2446 (AGAW…QLCP). One can recognise a TIL 5 domain in the interval 2468–2511 (VPPCPPSCLDPEANRSCSGHCMEGCRCPPGLLLQDSHCLPLSEC). Residues Asn-2481 and Asn-2530 are each glycosylated (N-linked (GlcNAc...) asparagine). 3 consecutive TSP type-1 domains span residues 2551 to 2605 (SCGW…TDCG), 2609 to 2664 (PGWT…PVCP), and 2666 to 2719 (PSAW…HPCT). Cystine bridges form between Cys-2552–Cys-2590, Cys-2563–Cys-2567, Cys-2600–Cys-2604, Cys-2620–Cys-2658, Cys-2624–Cys-2663, Cys-2640–Cys-2648, Cys-2678–Cys-2713, Cys-2682–Cys-2718, and Cys-2693–Cys-2703. Residues Asn-2772 and Asn-2802 are each glycosylated (N-linked (GlcNAc...) asparagine). 2 TSP type-1 domains span residues 2820–2875 (ACGW…RPCR) and 2876–2919 (GPGA…QPCA). Intrachain disulfides connect Cys-2821-Cys-2859, Cys-2832-Cys-2836, and Cys-2869-Cys-2874. Asn-2897, Asn-2952, Asn-2999, and Asn-3009 each carry an N-linked (GlcNAc...) asparagine glycan. Residues 2926 to 2978 (CPEDQQWLDCAQGPASCAHLSIPGEANQTCHPGCYCLSGMLLLNNVCVPVQDC) form the TIL 6 domain. TSP type-1 domains lie at 3019–3086 (QPAW…PGCN) and 3088–3143 (AGGW…QPCP). 6 disulfides stabilise this stretch: Cys-3031–Cys-3080, Cys-3035–Cys-3085, Cys-3046–Cys-3070, Cys-3100–Cys-3137, Cys-3104–Cys-3142, and Cys-3115–Cys-3127. Residue Asn-3146 is glycosylated (N-linked (GlcNAc...) asparagine). Residues 3151-3201 (EGAEYSPCGPPCPRSCDDLVHCVWRCQPGCYCPLGKVLSADGAICVKPSYC) enclose the TIL 7 domain. N-linked (GlcNAc...) asparagine glycosylation is present at Asn-3235. 2 TSP type-1 domains span residues 3244–3306 (SGDW…TACP) and 3308–3363 (DGAW…TLCT). 6 disulfides stabilise this stretch: Cys-3256–Cys-3299, Cys-3260–Cys-3305, Cys-3271–Cys-3283, Cys-3320–Cys-3355, Cys-3323–Cys-3362, and Cys-3333–Cys-3345. An N-linked (GlcNAc...) asparagine glycan is attached at Asn-3301. Asn-3357 carries N-linked (GlcNAc...) asparagine glycosylation. Residues 3365–3421 (CGGGQDLLPCGQPCPHSCQDLSLGSTCQPGSAGCQSGCGCPPGQLSQDGLCVFPVDC) enclose the TIL 8 domain. Residues Asn-3435 and Asn-3462 are each glycosylated (N-linked (GlcNAc...) asparagine). The region spanning 3481–3529 (PGIWSSWGPWEKCSVSCGGGEQLRSRQCARPPCPGLAQQSRICHIHVCR) is the TSP type-1 15 domain. Cystine bridges form between Cys-3493–Cys-3523, Cys-3497–Cys-3528, and Cys-3508–Cys-3513. N-linked (GlcNAc...) asparagine glycosylation is present at Asn-3638. TSP type-1 domains lie at 3657-3713 (HGSF…PECP), 3727-3779 (AGGW…PSCA), 3793-3849 (NCFW…RACP), and 3851-3906 (PGGW…MPCE). Cystine bridges form between Cys-3669–Cys-3707, Cys-3673–Cys-3712, and Cys-3685–Cys-3697. An N-linked (GlcNAc...) asparagine glycan is attached at Asn-3761. Cystine bridges form between Cys-3794-Cys-3830, Cys-3805-Cys-3809, Cys-3843-Cys-3848, Cys-3863-Cys-3900, Cys-3867-Cys-3905, and Cys-3878-Cys-3890. The 56-residue stretch at 3909 to 3964 (CPAGMEMVSCANHCPYSCSDLQEGGMCQEDQACQLGCRCSEGFLEQDGGCVPVGHC) folds into the TIL 9 domain. Residue Asn-3986 is glycosylated (N-linked (GlcNAc...) asparagine). TSP type-1 domains lie at 4006–4059 (HCAW…VPCP), 4100–4155 (PRGW…QLCL), 4157–4213 (KLER…GPCQ), and 4215–4269 (DCTW…GNCS). Intrachain disulfides connect Cys-4007/Cys-4043, Cys-4018/Cys-4022, Cys-4053/Cys-4058, Cys-4112/Cys-4149, Cys-4116/Cys-4154, Cys-4127/Cys-4139, Cys-4169/Cys-4207, Cys-4173/Cys-4212, Cys-4184/Cys-4195, Cys-4216/Cys-4253, Cys-4227/Cys-4229, and Cys-4263/Cys-4268. An N-linked (GlcNAc...) asparagine glycan is attached at Asn-4196. Residue Asn-4267 is glycosylated (N-linked (GlcNAc...) asparagine). Residues 4273–4328 (CPPPFEFQSCGSPCAGLCATHLNHRLCQDLPPCQPGCYCPKGLLEQAGSCILPEQC) form the TIL 10 domain. Asn-4408 and Asn-4463 each carry an N-linked (GlcNAc...) asparagine glycan. One can recognise a TSP type-1 24 domain in the interval 4465–4516 (TCQWGPWGPWSPCQMPCSGGFKLRWRVARDTSAGECPGPWAQTESCNMGSCP). 3 disulfide bridges follow: Cys-4466–Cys-4500, Cys-4477–Cys-4481, and Cys-4510–Cys-4515. One can recognise a TIL 11 domain in the interval 4530 to 4576 (DCANQCPRSCADLWDGVQCLQGPCSPGCRCPPGQLVQDGHCVPISSC). Asn-4584, Asn-4601, and Asn-4606 each carry an N-linked (GlcNAc...) asparagine glycan. Residues 4616-4669 (CPVLGPWSAWSECSAVCGKGTMVRHRSCEEHPDREPCQALDLQQWQECNLQACP) enclose the TSP type-1 25 domain. 3 cysteine pairs are disulfide-bonded: Cys-4628–Cys-4663, Cys-4632–Cys-4668, and Cys-4643–Cys-4652. In terms of domain architecture, TIL 12 spans 4671–4725 (CPPGQVLSTCATMCPSLCSHLWPGTICVREPCQLGCGCPGGQLLYNGTCIPPEAC). Asn-4716, Asn-4756, Asn-4799, and Asn-4806 each carry an N-linked (GlcNAc...) asparagine glycan. The TIL 13 domain maps to 4777–4835 (CAPGEIWQHGKLGPCEKTCPEMNMTQAWSNCTEAQAPGCVCQLGYFRSQTGLCVPEDHC). Residues 4835–4893 (CECWHHGSPHLPGSEWQEACESCRCLHGKSVCIRHCPELSCAQGEVIMQEPGSCCPICQ) form the VWFC 3 domain. 4 disulfides stabilise this stretch: Cys-4892-Cys-4952, Cys-4918-Cys-4969, Cys-4928-Cys-4985, and Cys-4932-Cys-4987. Residues 4892–4991 (CQQDTLKEEP…IHSCQCSACQ (100 aa)) enclose the CTCK domain. N-linked (GlcNAc...) asparagine glycosylation occurs at Asn-4912.

The protein belongs to the thrombospondin family. As to expression, subcommissural organ.

Its subcellular location is the secreted. It is found in the extracellular space. Its function is as follows. Involved in the modulation of neuronal aggregation. May be involved in developmental events during the formation of the central nervous system. This Mus musculus (Mouse) protein is SCO-spondin.